Consider the following 204-residue polypeptide: Tat proofreading chaperone DmsD (204 aa).

The protein belongs to the TorD/DmsD family. DmsD subfamily.

Its function is as follows. Required for biogenesis/assembly of DMSO reductase, but not for the interaction of the DmsA signal peptide with the Tat system. May be part of a chaperone cascade complex that facilitates a folding-maturation pathway for the substrate protein. The chain is Tat proofreading chaperone DmsD from Salmonella paratyphi A (strain ATCC 9150 / SARB42).